We begin with the raw amino-acid sequence, 208 residues long: dITP/XTP pyrophosphatase (208 aa).

7 to 12 (SNNAKK) provides a ligand contact to substrate. Mg(2+)-binding residues include Glu-39 and Asp-68. The Proton acceptor role is filled by Asp-68. Substrate contacts are provided by residues Ser-69, 162 to 165 (FGYD), Lys-185, and 190 to 191 (HR).

The protein belongs to the HAM1 NTPase family. Homodimer. The cofactor is Mg(2+).

The catalysed reaction is XTP + H2O = XMP + diphosphate + H(+). It catalyses the reaction dITP + H2O = dIMP + diphosphate + H(+). The enzyme catalyses ITP + H2O = IMP + diphosphate + H(+). Its function is as follows. Pyrophosphatase that catalyzes the hydrolysis of nucleoside triphosphates to their monophosphate derivatives, with a high preference for the non-canonical purine nucleotides XTP (xanthosine triphosphate), dITP (deoxyinosine triphosphate) and ITP. Seems to function as a house-cleaning enzyme that removes non-canonical purine nucleotides from the nucleotide pool, thus preventing their incorporation into DNA/RNA and avoiding chromosomal lesions. This is dITP/XTP pyrophosphatase from Methylibium petroleiphilum (strain ATCC BAA-1232 / LMG 22953 / PM1).